The primary structure comprises 346 residues: Holliday junction branch migration complex subunit RuvB (346 aa).

The segment covering 1 to 11 (MTEQRTIASSA) has biased composition (polar residues). The disordered stretch occupies residues 1-20 (MTEQRTIASSATREDEAADA). Residues 1 to 183 (MTEQRTIASS…FGIVQRLEFY (183 aa)) form a large ATPase domain (RuvB-L) region. ATP is bound by residues I22, R23, G64, K67, T68, T69, 130 to 132 (EDF), R173, Y183, and R220. T68 provides a ligand contact to Mg(2+). Residues 184 to 254 (SPQELTRIVI…VAQAAMQMLK (71 aa)) are small ATPAse domain (RuvB-S). The interval 257–346 (PEGFDELDRR…PAIGEPGDLF (90 aa)) is head domain (RuvB-H). DNA-binding residues include R293, R312, and R317.

Belongs to the RuvB family. As to quaternary structure, homohexamer. Forms an RuvA(8)-RuvB(12)-Holliday junction (HJ) complex. HJ DNA is sandwiched between 2 RuvA tetramers; dsDNA enters through RuvA and exits via RuvB. An RuvB hexamer assembles on each DNA strand where it exits the tetramer. Each RuvB hexamer is contacted by two RuvA subunits (via domain III) on 2 adjacent RuvB subunits; this complex drives branch migration. In the full resolvosome a probable DNA-RuvA(4)-RuvB(12)-RuvC(2) complex forms which resolves the HJ.

The protein resides in the cytoplasm. The catalysed reaction is ATP + H2O = ADP + phosphate + H(+). In terms of biological role, the RuvA-RuvB-RuvC complex processes Holliday junction (HJ) DNA during genetic recombination and DNA repair, while the RuvA-RuvB complex plays an important role in the rescue of blocked DNA replication forks via replication fork reversal (RFR). RuvA specifically binds to HJ cruciform DNA, conferring on it an open structure. The RuvB hexamer acts as an ATP-dependent pump, pulling dsDNA into and through the RuvAB complex. RuvB forms 2 homohexamers on either side of HJ DNA bound by 1 or 2 RuvA tetramers; 4 subunits per hexamer contact DNA at a time. Coordinated motions by a converter formed by DNA-disengaged RuvB subunits stimulates ATP hydrolysis and nucleotide exchange. Immobilization of the converter enables RuvB to convert the ATP-contained energy into a lever motion, pulling 2 nucleotides of DNA out of the RuvA tetramer per ATP hydrolyzed, thus driving DNA branch migration. The RuvB motors rotate together with the DNA substrate, which together with the progressing nucleotide cycle form the mechanistic basis for DNA recombination by continuous HJ branch migration. Branch migration allows RuvC to scan DNA until it finds its consensus sequence, where it cleaves and resolves cruciform DNA. The polypeptide is Holliday junction branch migration complex subunit RuvB (Xanthomonas campestris pv. campestris (strain B100)).